The sequence spans 444 residues: Argininosuccinate synthase (444 aa).

Residues 18 to 26 (AFSGGLDTS) and A44 each bind ATP. Position 100 (Y100) interacts with L-citrulline. ATP contacts are provided by G130 and T132. Positions 132, 136, and 137 each coordinate L-aspartate. Position 136 (N136) interacts with L-citrulline. D137 is a binding site for ATP. R140 and S193 together coordinate L-citrulline. Position 195 (D195) interacts with ATP. T202, E204, and E281 together coordinate L-citrulline.

This sequence belongs to the argininosuccinate synthase family. Type 2 subfamily. In terms of assembly, homotetramer.

It is found in the cytoplasm. It catalyses the reaction L-citrulline + L-aspartate + ATP = 2-(N(omega)-L-arginino)succinate + AMP + diphosphate + H(+). It functions in the pathway amino-acid biosynthesis; L-arginine biosynthesis; L-arginine from L-ornithine and carbamoyl phosphate: step 2/3. This Histophilus somni (strain 2336) (Haemophilus somnus) protein is Argininosuccinate synthase.